Here is a 368-residue protein sequence, read N- to C-terminus: Cobalt-precorrin-5B C(1)-methyltransferase (368 aa).

This sequence belongs to the CbiD family.

It carries out the reaction Co-precorrin-5B + S-adenosyl-L-methionine = Co-precorrin-6A + S-adenosyl-L-homocysteine. It functions in the pathway cofactor biosynthesis; adenosylcobalamin biosynthesis; cob(II)yrinate a,c-diamide from sirohydrochlorin (anaerobic route): step 6/10. Its function is as follows. Catalyzes the methylation of C-1 in cobalt-precorrin-5B to form cobalt-precorrin-6A. The polypeptide is Cobalt-precorrin-5B C(1)-methyltransferase (Brucella abortus (strain S19)).